We begin with the raw amino-acid sequence, 1187 residues long: Myelin transcription factor 1-like protein (1187 aa).

Residues M1–P20 form a disordered region. The CCHHC-type 1 zinc-finger motif lies at E22–D65. 4 residues coordinate Zn(2+): C31, C36, H49, and C55. Disordered stretches follow at residues P56 to C178 and R221 to S248. Acidic residues predominate over residues E89–E172. Residue S251 is modified to Phosphoserine. Disordered regions lie at residues S343 to E422 and R450 to G509. Positions E344–V358 are enriched in polar residues. 3 stretches are compositionally biased toward basic and acidic residues: residues V362 to Y377, A401 to D412, and R450 to K504. 2 CCHHC-type zinc fingers span residues S496 to I539 and L540 to K583. Residues C505, C510, H523, C529, C549, C554, H567, and C573 each coordinate Zn(2+). A disordered region spans residues A684 to S708. 3 CCHHC-type zinc fingers span residues L895 to I938, D944 to G987, and K997 to A1040. 12 residues coordinate Zn(2+): C904, C909, H922, C928, C953, C958, H971, C977, C1006, C1011, H1024, and C1030. Residues S1055 to H1131 adopt a coiled-coil conformation.

Belongs to the MYT1 family. In terms of assembly, interacts with SIN3B. As to expression, brain, testis and pituitary gland. Expression is higher in the brain than in the testis and pituitary gland. Highest level expression seen in the developing CNS.

It localises to the nucleus. The protein localises to the chromosome. Functionally, transcription factor that plays a key role in neuronal differentiation. Acts by specifically repressing expression of non-neuronal genes during neuron differentiation. In contrast to other transcription repressors that inhibit specific lineages, mediates repression of multiple differentiation programs. Also represses expression of negative regulators of neurogenesis, such as members of the Notch signaling pathway, including HES1. The combination of three transcription factors, ASCL1, POU3F2/BRN2 and MYT1L, is sufficient to reprogram fibroblasts and other somatic cells into induced neuronal (iN) cells in vitro. Directly binds the 5'-AAGTT-3' core motif present on the promoter of target genes and represses transcription by recruiting a multiprotein complex containing SIN3B. The 5'-AAGTT-3' core motif is absent from the promoter of neural genes. This is Myelin transcription factor 1-like protein (Myt1l) from Rattus norvegicus (Rat).